We begin with the raw amino-acid sequence, 136 residues long: Ig heavy chain V region BCL1 (136 aa).

The first 19 residues, 1-19 (MGWSCIIFFLVATATGVHS), serve as a signal peptide directing secretion. The region spanning 20 to 135 (QVQLQQSGPE…WGQGTTLTVS (116 aa)) is the Ig-like domain.

This Mus musculus (Mouse) protein is Ig heavy chain V region BCL1.